A 218-amino-acid polypeptide reads, in one-letter code: Charged multivesicular body protein 6 (218 aa).

Coiled coils occupy residues 15–42 and 70–172; these read EDKI…QTQV and QEKM…AQQY.

This sequence belongs to the SNF7 family. As to quaternary structure, probable core component of the endosomal sorting required for transport complex III (ESCRT-III).

The protein resides in the endosome membrane. In terms of biological role, probable core component of the endosomal sorting required for transport complex III (ESCRT-III) which is involved in multivesicular bodies (MVBs) formation and sorting of endosomal cargo proteins into MVBs. MVBs contain intraluminal vesicles (ILVs) that are generated by invagination and scission from the limiting membrane of the endosome and are delivered to lysosomes enabling degradation of membrane proteins. This is Charged multivesicular body protein 6 (chmp6) from Dictyostelium discoideum (Social amoeba).